A 250-amino-acid polypeptide reads, in one-letter code: 5'-nucleotidase SurE (250 aa).

4 residues coordinate a divalent metal cation: D8, D9, S39, and N95.

This sequence belongs to the SurE nucleotidase family. The cofactor is a divalent metal cation.

It is found in the cytoplasm. It catalyses the reaction a ribonucleoside 5'-phosphate + H2O = a ribonucleoside + phosphate. Its function is as follows. Nucleotidase that shows phosphatase activity on nucleoside 5'-monophosphates. The chain is 5'-nucleotidase SurE from Cupriavidus necator (strain ATCC 17699 / DSM 428 / KCTC 22496 / NCIMB 10442 / H16 / Stanier 337) (Ralstonia eutropha).